The primary structure comprises 166 residues: Large ribosomal subunit protein uL10 (166 aa).

This sequence belongs to the universal ribosomal protein uL10 family. In terms of assembly, part of the ribosomal stalk of the 50S ribosomal subunit. The N-terminus interacts with L11 and the large rRNA to form the base of the stalk. The C-terminus forms an elongated spine to which L12 dimers bind in a sequential fashion forming a multimeric L10(L12)X complex.

Its function is as follows. Forms part of the ribosomal stalk, playing a central role in the interaction of the ribosome with GTP-bound translation factors. The sequence is that of Large ribosomal subunit protein uL10 from Pseudomonas putida (strain GB-1).